The chain runs to 598 residues: NADH-quinone oxidoreductase subunit C/D (598 aa).

The segment at 1-189 is NADH dehydrogenase I subunit C; that stretch reads MTDQIAQNSA…DPYVLTKQKE (189 aa). The interval 213-598 is NADH dehydrogenase I subunit D; that stretch reads DFMFLNLGPN…IDFVMSDVDR (386 aa).

It in the N-terminal section; belongs to the complex I 30 kDa subunit family. This sequence in the C-terminal section; belongs to the complex I 49 kDa subunit family. NDH-1 is composed of 13 different subunits. Subunits NuoB, CD, E, F, and G constitute the peripheral sector of the complex.

It localises to the cell inner membrane. It catalyses the reaction a quinone + NADH + 5 H(+)(in) = a quinol + NAD(+) + 4 H(+)(out). NDH-1 shuttles electrons from NADH, via FMN and iron-sulfur (Fe-S) centers, to quinones in the respiratory chain. The immediate electron acceptor for the enzyme in this species is believed to be ubiquinone. Couples the redox reaction to proton translocation (for every two electrons transferred, four hydrogen ions are translocated across the cytoplasmic membrane), and thus conserves the redox energy in a proton gradient. In Proteus mirabilis (strain HI4320), this protein is NADH-quinone oxidoreductase subunit C/D.